The chain runs to 402 residues: Probable tRNA pseudouridine synthase D (402 aa).

Asp94 serves as the catalytic Nucleophile. Residues 175-364 (YILNYYGTQR…PGTRRKLITK (190 aa)) form the TRUD domain.

Belongs to the pseudouridine synthase TruD family.

The catalysed reaction is uridine(13) in tRNA = pseudouridine(13) in tRNA. Its function is as follows. Could be responsible for synthesis of pseudouridine from uracil-13 in transfer RNAs. In Methanococcus aeolicus (strain ATCC BAA-1280 / DSM 17508 / OCM 812 / Nankai-3), this protein is Probable tRNA pseudouridine synthase D.